The sequence spans 485 residues: Ribulose bisphosphate carboxylase large chain (485 aa).

Substrate contacts are provided by asparagine 124 and threonine 174. Lysine 176 functions as the Proton acceptor in the catalytic mechanism. Lysine 178 contacts substrate. Lysine 202, aspartate 204, and glutamate 205 together coordinate Mg(2+). At lysine 202 the chain carries N6-carboxylysine. The active-site Proton acceptor is the histidine 294. Substrate contacts are provided by arginine 295, histidine 327, and serine 379.

Belongs to the RuBisCO large chain family. Type I subfamily. Heterohexadecamer of 8 large chains and 8 small chains. Mg(2+) is required as a cofactor.

It carries out the reaction 2 (2R)-3-phosphoglycerate + 2 H(+) = D-ribulose 1,5-bisphosphate + CO2 + H2O. The enzyme catalyses D-ribulose 1,5-bisphosphate + O2 = 2-phosphoglycolate + (2R)-3-phosphoglycerate + 2 H(+). Functionally, ruBisCO catalyzes two reactions: the carboxylation of D-ribulose 1,5-bisphosphate, the primary event in carbon dioxide fixation, as well as the oxidative fragmentation of the pentose substrate. Both reactions occur simultaneously and in competition at the same active site. The polypeptide is Ribulose bisphosphate carboxylase large chain (Rhodopseudomonas palustris (strain ATCC BAA-98 / CGA009)).